The sequence spans 716 residues: Eosinophil peroxidase (716 aa).

The signal sequence occupies residues 1–18 (MMQQLLALVGALATLILT). Residues 19–140 (QHAEGTAPAS…SGCALQDQAE (122 aa)) constitute a propeptide that is removed on maturation. 2 N-linked (GlcNAc...) asparagine glycosylation sites follow: asparagine 53 and asparagine 114. A disulfide bond links cysteine 142 and cysteine 153. Aspartate 233 contributes to the heme b binding site. Histidine 234 functions as the Proton acceptor in the catalytic mechanism. Aspartate 235 contacts Ca(2+). 2 disulfides stabilise this stretch: cysteine 254–cysteine 264 and cysteine 258–cysteine 282. Ca(2+) contacts are provided by threonine 307, phenylalanine 309, aspartate 311, and serine 313. N-linked (GlcNAc...) asparagine glycosylation is found at asparagine 328 and asparagine 364. A disulfide bond links cysteine 360 and cysteine 371. Residues glutamate 381 and histidine 475 each contribute to the heme b site. Tyrosine 489 carries the 3'-nitrotyrosine modification. 2 cysteine pairs are disulfide-bonded: cysteine 579/cysteine 636 and cysteine 677/cysteine 702. Residue asparagine 709 is glycosylated (N-linked (GlcNAc...) asparagine).

The protein belongs to the peroxidase family. XPO subfamily. Tetramer of two light chains and two heavy chains. It depends on Ca(2+) as a cofactor. Heme b is required as a cofactor.

It localises to the cytoplasmic granule. It carries out the reaction 2 a phenolic donor + H2O2 = 2 a phenolic radical donor + 2 H2O. Its function is as follows. Mediates tyrosine nitration of secondary granule proteins in mature resting eosinophils. This is Eosinophil peroxidase (Epx) from Mus musculus (Mouse).